A 450-amino-acid chain; its full sequence is tRNA modification GTPase MnmE (450 aa).

Arg-25, Glu-86, and Arg-126 together coordinate (6S)-5-formyl-5,6,7,8-tetrahydrofolate. One can recognise a TrmE-type G domain in the interval 221-373 (GLRVALVGRP…LVQALLERCG (153 aa)). Asn-231 contacts K(+). GTP is bound by residues 231–236 (NVGKSS), 250–256 (TELPGTT), 275–278 (DTAG), and 336–339 (NKAD). A Mg(2+)-binding site is contributed by Ser-235. Residues Thr-250, Leu-252, and Thr-255 each coordinate K(+). Thr-256 contributes to the Mg(2+) binding site. Lys-450 is a binding site for (6S)-5-formyl-5,6,7,8-tetrahydrofolate.

It belongs to the TRAFAC class TrmE-Era-EngA-EngB-Septin-like GTPase superfamily. TrmE GTPase family. As to quaternary structure, homodimer. Heterotetramer of two MnmE and two MnmG subunits. The cofactor is K(+).

The protein resides in the cytoplasm. Functionally, exhibits a very high intrinsic GTPase hydrolysis rate. Involved in the addition of a carboxymethylaminomethyl (cmnm) group at the wobble position (U34) of certain tRNAs, forming tRNA-cmnm(5)s(2)U34. This chain is tRNA modification GTPase MnmE, found in Parasynechococcus marenigrum (strain WH8102).